Reading from the N-terminus, the 427-residue chain is Kallistatin (427 aa).

The first 20 residues, 1-20, serve as a signal peptide directing secretion; the sequence is MHLIDYLLLLLVGLLALSHG. N-linked (GlcNAc...) asparagine glycosylation is found at Asn-33, Asn-108, and Asn-157. Asn-238 carries N-linked (GlcNAc...) (complex) asparagine glycosylation.

It belongs to the serpin family. Monomer and some homodimers. The N-terminus is blocked. As to expression, expressed by the liver and secreted in plasma.

Its subcellular location is the secreted. Inhibits human amidolytic and kininogenase activities of tissue kallikrein. Inhibition is achieved by formation of an equimolar, heat- and SDS-stable complex between the inhibitor and the enzyme, and generation of a small C-terminal fragment of the inhibitor due to cleavage at the reactive site by tissue kallikrein. This Homo sapiens (Human) protein is Kallistatin (SERPINA4).